The chain runs to 332 residues: GTP 3',8-cyclase (332 aa).

One can recognise a Radical SAM core domain in the interval 9–220 (RFARKVDYLR…DQVRERIAER (212 aa)). A GTP-binding site is contributed by arginine 18. [4Fe-4S] cluster-binding residues include cysteine 25 and cysteine 29. Residue tyrosine 31 coordinates S-adenosyl-L-methionine. Cysteine 32 contributes to the [4Fe-4S] cluster binding site. Arginine 67 is a GTP binding site. Glycine 71 is a binding site for S-adenosyl-L-methionine. Threonine 98 contributes to the GTP binding site. Serine 122 provides a ligand contact to S-adenosyl-L-methionine. A GTP-binding site is contributed by lysine 159. Methionine 193 serves as a coordination point for S-adenosyl-L-methionine. 2 residues coordinate [4Fe-4S] cluster: cysteine 258 and cysteine 261. 263 to 265 (RVR) contacts GTP. A [4Fe-4S] cluster-binding site is contributed by cysteine 275.

This sequence belongs to the radical SAM superfamily. MoaA family. Monomer and homodimer. The cofactor is [4Fe-4S] cluster.

The catalysed reaction is GTP + AH2 + S-adenosyl-L-methionine = (8S)-3',8-cyclo-7,8-dihydroguanosine 5'-triphosphate + 5'-deoxyadenosine + L-methionine + A + H(+). The protein operates within cofactor biosynthesis; molybdopterin biosynthesis. In terms of biological role, catalyzes the cyclization of GTP to (8S)-3',8-cyclo-7,8-dihydroguanosine 5'-triphosphate. This is GTP 3',8-cyclase from Pseudomonas savastanoi pv. phaseolicola (strain 1448A / Race 6) (Pseudomonas syringae pv. phaseolicola (strain 1448A / Race 6)).